A 933-amino-acid polypeptide reads, in one-letter code: Protein translocase subunit SecA (933 aa).

ATP contacts are provided by residues Q87, 105 to 109, and D515; that span reads GEGKT. Positions 917, 919, 928, and 929 each coordinate Zn(2+).

This sequence belongs to the SecA family. As to quaternary structure, monomer and homodimer. Part of the essential Sec protein translocation apparatus which comprises SecA, SecYEG and auxiliary proteins SecDF-YajC and YidC. The cofactor is Zn(2+).

It is found in the cell inner membrane. The protein localises to the cytoplasm. The catalysed reaction is ATP + H2O + cellular proteinSide 1 = ADP + phosphate + cellular proteinSide 2.. Functionally, part of the Sec protein translocase complex. Interacts with the SecYEG preprotein conducting channel. Has a central role in coupling the hydrolysis of ATP to the transfer of proteins into and across the cell membrane, serving both as a receptor for the preprotein-SecB complex and as an ATP-driven molecular motor driving the stepwise translocation of polypeptide chains across the membrane. This chain is Protein translocase subunit SecA, found in Burkholderia cenocepacia (strain ATCC BAA-245 / DSM 16553 / LMG 16656 / NCTC 13227 / J2315 / CF5610) (Burkholderia cepacia (strain J2315)).